A 782-amino-acid polypeptide reads, in one-letter code: E3 UFM1-protein ligase 1 homolog (782 aa).

Positions 404 to 477 (NASTQELEDD…GSRGGGGVNK (74 aa)) are disordered. Over residues 443 to 453 (KSTKKHQRGKA) the composition is skewed to basic residues.

It belongs to the UFL1 family.

E3 UFM1-protein ligase that mediates ufmylation of target proteins. In Drosophila erecta (Fruit fly), this protein is E3 UFM1-protein ligase 1 homolog.